The chain runs to 434 residues: uncharacterized protein (434 aa).

11 helical membrane passes run 50-70, 72-92, 95-115, 135-155, 158-178, 179-199, 229-249, 288-308, 319-339, 376-396, and 412-432; these read GSIA…SFTL, TGLL…VLAI, LMAF…LLPV, SPVV…QFGW, SLIA…YFPH, LNPE…IAIT, LPYI…KIFA, GFVP…VAGF, PNPM…VLLL, IFAA…AIYF, and VVAV…GLFV.

It localises to the cell membrane. This is an uncharacterized protein from Escherichia coli (strain K12).